The chain runs to 181 residues: Protein Syd (181 aa).

Belongs to the Syd family.

Its subcellular location is the cell inner membrane. Functionally, interacts with the SecY protein in vivo. May bind preferentially to an uncomplexed state of SecY, thus functioning either as a chelating agent for excess SecY in the cell or as a regulatory factor that negatively controls the translocase function. The protein is Protein Syd of Shigella dysenteriae serotype 1 (strain Sd197).